Reading from the N-terminus, the 272-residue chain is Shikimate dehydrogenase (NADP(+)) (272 aa).

Shikimate contacts are provided by residues 14 to 16 (SKS) and T61. K65 functions as the Proton acceptor in the catalytic mechanism. Residue E77 participates in NADP(+) binding. Shikimate is bound by residues N86 and D102. Residues 126-130 (GAGGA), 149-154 (NRTVSR), and M213 contribute to the NADP(+) site. Y215 is a binding site for shikimate. G237 contacts NADP(+).

It belongs to the shikimate dehydrogenase family. In terms of assembly, homodimer.

It catalyses the reaction shikimate + NADP(+) = 3-dehydroshikimate + NADPH + H(+). The protein operates within metabolic intermediate biosynthesis; chorismate biosynthesis; chorismate from D-erythrose 4-phosphate and phosphoenolpyruvate: step 4/7. Functionally, involved in the biosynthesis of the chorismate, which leads to the biosynthesis of aromatic amino acids. Catalyzes the reversible NADPH linked reduction of 3-dehydroshikimate (DHSA) to yield shikimate (SA). The polypeptide is Shikimate dehydrogenase (NADP(+)) (Escherichia coli O6:K15:H31 (strain 536 / UPEC)).